Reading from the N-terminus, the 143-residue chain is Nucleoside diphosphate kinase (143 aa).

Lys-11, Phe-59, Arg-87, Thr-93, Arg-104, and Asn-114 together coordinate ATP. His-117 acts as the Pros-phosphohistidine intermediate in catalysis.

This sequence belongs to the NDK family. Homotetramer. It depends on Mg(2+) as a cofactor.

The protein localises to the cytoplasm. The enzyme catalyses a 2'-deoxyribonucleoside 5'-diphosphate + ATP = a 2'-deoxyribonucleoside 5'-triphosphate + ADP. It carries out the reaction a ribonucleoside 5'-diphosphate + ATP = a ribonucleoside 5'-triphosphate + ADP. In terms of biological role, major role in the synthesis of nucleoside triphosphates other than ATP. The ATP gamma phosphate is transferred to the NDP beta phosphate via a ping-pong mechanism, using a phosphorylated active-site intermediate. The polypeptide is Nucleoside diphosphate kinase (Shewanella baltica (strain OS223)).